The sequence spans 261 residues: 1-(5-phosphoribosyl)-5-[(5-phosphoribosylamino)methylideneamino] imidazole-4-carboxamide isomerase (261 aa).

The protein belongs to the HisA/HisF family.

It localises to the cytoplasm. The enzyme catalyses 1-(5-phospho-beta-D-ribosyl)-5-[(5-phospho-beta-D-ribosylamino)methylideneamino]imidazole-4-carboxamide = 5-[(5-phospho-1-deoxy-D-ribulos-1-ylimino)methylamino]-1-(5-phospho-beta-D-ribosyl)imidazole-4-carboxamide. It functions in the pathway amino-acid biosynthesis; L-histidine biosynthesis; L-histidine from 5-phospho-alpha-D-ribose 1-diphosphate: step 4/9. Functionally, catalyzes the isomerization of the aminoaldose moiety of ProFAR to the aminoketose of PRFAR. In Saccharomyces cerevisiae (strain ATCC 204508 / S288c) (Baker's yeast), this protein is 1-(5-phosphoribosyl)-5-[(5-phosphoribosylamino)methylideneamino] imidazole-4-carboxamide isomerase.